Here is a 72-residue protein sequence, read N- to C-terminus: Palustrin-2CG1 (72 aa).

The signal sequence occupies residues 1–22; it reads MFTMKKPLLLLFFLGTISLSLC. Positions 23 to 39 are cleaved as a propeptide — removed in mature form; the sequence is QEERGADEDDGEMTEEV. Cys-64 and Cys-70 are joined by a disulfide.

In terms of tissue distribution, expressed by the skin glands.

The protein localises to the secreted. Antimicrobial peptide active against a variety of Gram-positive and some Gram-negative bacterial strains. Has antifungal activity against a slime mold isolate. Has hemolytic activity against human erythrocytes. The chain is Palustrin-2CG1 from Amolops chunganensis (Chungan torrent frog).